The following is a 93-amino-acid chain: Acylphosphatase (93 aa).

One can recognise an Acylphosphatase-like domain in the interval 6-93; the sequence is RLVAWVRGQV…RGGYEGFAIR (88 aa). Catalysis depends on residues Arg21 and Asn40.

It belongs to the acylphosphatase family.

The catalysed reaction is an acyl phosphate + H2O = a carboxylate + phosphate + H(+). The polypeptide is Acylphosphatase (acyP) (Streptomyces coelicolor (strain ATCC BAA-471 / A3(2) / M145)).